Consider the following 145-residue polypeptide: Cytochrome b (145 aa).

Residues 38–58 (FFALHFLLPFVLAALVIMHLI) traverse the membrane as a helical segment. Positions 42 and 56 each coordinate heme b. A ubiquinone is bound at residue histidine 61. A helical transmembrane segment spans residues 85 to 105 (FVFKDLVTVFIFFIVLSVFVF).

The protein belongs to the cytochrome b family. As to quaternary structure, fungal cytochrome b-c1 complex contains 10 subunits; 3 respiratory subunits, 2 core proteins and 5 low-molecular weight proteins. Cytochrome b-c1 complex is a homodimer. Requires heme b as cofactor.

It is found in the mitochondrion inner membrane. Its function is as follows. Component of the ubiquinol-cytochrome c reductase complex (complex III or cytochrome b-c1 complex) that is part of the mitochondrial respiratory chain. The b-c1 complex mediates electron transfer from ubiquinol to cytochrome c. Contributes to the generation of a proton gradient across the mitochondrial membrane that is then used for ATP synthesis. This chain is Cytochrome b (cob), found in Aspergillus fumigatus (Neosartorya fumigata).